Consider the following 271-residue polypeptide: Formamidopyrimidine-DNA glycosylase (271 aa).

Residue P2 is the Schiff-base intermediate with DNA of the active site. E3 functions as the Proton donor in the catalytic mechanism. Catalysis depends on K58, which acts as the Proton donor; for beta-elimination activity. Residues H92, R111, and K152 each contribute to the DNA site. The FPG-type zinc-finger motif lies at 237–271 (YVYGKVQKPCKICNNTITLIRQNGRSTYFCNACQN). The active-site Proton donor; for delta-elimination activity is R261.

The protein belongs to the FPG family. As to quaternary structure, monomer. Zn(2+) is required as a cofactor.

The catalysed reaction is Hydrolysis of DNA containing ring-opened 7-methylguanine residues, releasing 2,6-diamino-4-hydroxy-5-(N-methyl)formamidopyrimidine.. It catalyses the reaction 2'-deoxyribonucleotide-(2'-deoxyribose 5'-phosphate)-2'-deoxyribonucleotide-DNA = a 3'-end 2'-deoxyribonucleotide-(2,3-dehydro-2,3-deoxyribose 5'-phosphate)-DNA + a 5'-end 5'-phospho-2'-deoxyribonucleoside-DNA + H(+). Involved in base excision repair of DNA damaged by oxidation or by mutagenic agents. Acts as a DNA glycosylase that recognizes and removes damaged bases. Has a preference for oxidized purines, such as 7,8-dihydro-8-oxoguanine (8-oxoG). Has AP (apurinic/apyrimidinic) lyase activity and introduces nicks in the DNA strand. Cleaves the DNA backbone by beta-delta elimination to generate a single-strand break at the site of the removed base with both 3'- and 5'-phosphates. In Wolbachia sp. subsp. Brugia malayi (strain TRS), this protein is Formamidopyrimidine-DNA glycosylase.